A 315-amino-acid polypeptide reads, in one-letter code: Ribosomal RNA small subunit methyltransferase H (315 aa).

Residues 37–39 (GGH), Asp-57, Leu-91, Asp-105, and Gln-112 each bind S-adenosyl-L-methionine.

Belongs to the methyltransferase superfamily. RsmH family.

The protein resides in the cytoplasm. The enzyme catalyses cytidine(1402) in 16S rRNA + S-adenosyl-L-methionine = N(4)-methylcytidine(1402) in 16S rRNA + S-adenosyl-L-homocysteine + H(+). Specifically methylates the N4 position of cytidine in position 1402 (C1402) of 16S rRNA. In Syntrophus aciditrophicus (strain SB), this protein is Ribosomal RNA small subunit methyltransferase H.